The primary structure comprises 387 residues: Protein kinase gsk3 (387 aa).

The Protein kinase domain occupies 32–316; that stretch reads YTSSKVVGSG…AAEAMCHPFF (285 aa). Residues 38-46 and lysine 61 contribute to the ATP site; that span reads VGSGSFGVV. The Proton acceptor role is filled by aspartate 157. Residue serine 191 is modified to Phosphoserine. Tyrosine 192 carries the phosphotyrosine; by autocatalysis modification. Serine 335 bears the Phosphoserine mark.

It belongs to the protein kinase superfamily. CMGC Ser/Thr protein kinase family. GSK-3 subfamily. Autophosphorylated on tyrosine residues.

It localises to the cytoplasm. It is found in the nucleus. The catalysed reaction is L-seryl-[protein] + ATP = O-phospho-L-seryl-[protein] + ADP + H(+). It carries out the reaction L-threonyl-[protein] + ATP = O-phospho-L-threonyl-[protein] + ADP + H(+). Interacts with cdc14 which is thought to play a role in the initiation and completion of mitosis. Involved in the positive regulation of mis12. This Schizosaccharomyces pombe (strain 972 / ATCC 24843) (Fission yeast) protein is Protein kinase gsk3 (gsk3).